A 901-amino-acid chain; its full sequence is Vacuolar protein sorting-associated protein 41 homolog (901 aa).

Residues 1–37 are disordered; sequence MDETHENEASDSFDPVFENSYHDDVTFNTEDDDEPPL. One copy of the CHCR repeat lies at 618–760; it reads LRLLLDNADS…VAEFPAHFSQ (143 aa). Residues 839–893 form an RING-type; atypical zinc finger; that stretch reads CSLCAQIIINSNQETTKKFSDIKVFKCGHIFHLACSTSEMERRQSIEEGLCIACS.

It belongs to the VPS41 family. Probable component of the homotypic fusion and vacuole protein sorting (HOPS) complex consisting of the core class C Vps proteins vps-11, vps-16, vps-18, and which further associates with vps-33.1, vps-39 and vps-41.

The protein resides in the endosome membrane. It is found in the late endosome membrane. It localises to the early endosome membrane. Its subcellular location is the lysosome membrane. The protein localises to the golgi apparatus. The protein resides in the trans-Golgi network. It is found in the cytoplasmic vesicle. It localises to the clathrin-coated vesicle. Its subcellular location is the cytoplasm. The protein localises to the cytosol. Plays a role in vesicle-mediated protein trafficking to lysosomal compartments including the endocytic membrane transport pathways. Believed to act in part as a core component of the putative HOPS endosomal tethering complex which is proposed to be involved in the rab-5-to-rab-7 endosome conversion probably implicating sand-1, and via binding SNAREs and SNARE complexes to mediate tethering and docking events during SNARE-mediated membrane fusion. The HOPS complex is proposed to be recruited to rab-7 on the late endosomal membrane and to regulate late endocytic, phagocytic and autophagic traffic towards lysosomes. Within the HOPS complex, contributes to the normal development of gut granules in the adult intestine. May mediate the tethering of autophagosomes with lysosomes. Has a role in the negative regulation of apoptosis. Required for uptake of exogenous dsRNA which is used in experimental RNA silencing. The polypeptide is Vacuolar protein sorting-associated protein 41 homolog (Caenorhabditis elegans).